The sequence spans 510 residues: Beta-glucosidase 40 (510 aa).

A signal peptide spans 1 to 29 (MAHRRLIMTMTKMMMMVTMMMMMDKTCIC). A beta-D-glucoside is bound by residues glutamine 51, histidine 152, and 197-198 (NE). Residue glutamate 198 is the Proton donor of the active site. A disulfide bridge links cysteine 217 with cysteine 225. 2 N-linked (GlcNAc...) asparagine glycosylation sites follow: asparagine 229 and asparagine 278. Tyrosine 341 is an a beta-D-glucoside binding site. N-linked (GlcNAc...) asparagine glycosylation is present at asparagine 349. A beta-D-glucoside-binding positions include glutamate 414, tryptophan 464, 471–472 (EW), and phenylalanine 480. The active-site Nucleophile is glutamate 414. An N-linked (GlcNAc...) asparagine glycan is attached at asparagine 507.

The protein belongs to the glycosyl hydrolase 1 family.

It catalyses the reaction Hydrolysis of terminal, non-reducing beta-D-glucosyl residues with release of beta-D-glucose.. In Arabidopsis thaliana (Mouse-ear cress), this protein is Beta-glucosidase 40.